The primary structure comprises 380 residues: Dual-specificity RNA methyltransferase RlmN (380 aa).

The active-site Proton acceptor is the Glu94. One can recognise a Radical SAM core domain in the interval 100–339 (DGDRATLCVS…VTVRKTRGDD (240 aa)). A disulfide bridge links Cys107 with Cys344. The [4Fe-4S] cluster site is built by Cys114, Cys118, and Cys121. Residues 168–169 (GE), Ser200, 222–224 (SLH), and Asn301 contribute to the S-adenosyl-L-methionine site. Catalysis depends on Cys344, which acts as the S-methylcysteine intermediate.

It belongs to the radical SAM superfamily. RlmN family. The cofactor is [4Fe-4S] cluster.

It localises to the cytoplasm. It catalyses the reaction adenosine(2503) in 23S rRNA + 2 reduced [2Fe-2S]-[ferredoxin] + 2 S-adenosyl-L-methionine = 2-methyladenosine(2503) in 23S rRNA + 5'-deoxyadenosine + L-methionine + 2 oxidized [2Fe-2S]-[ferredoxin] + S-adenosyl-L-homocysteine. The enzyme catalyses adenosine(37) in tRNA + 2 reduced [2Fe-2S]-[ferredoxin] + 2 S-adenosyl-L-methionine = 2-methyladenosine(37) in tRNA + 5'-deoxyadenosine + L-methionine + 2 oxidized [2Fe-2S]-[ferredoxin] + S-adenosyl-L-homocysteine. Its function is as follows. Specifically methylates position 2 of adenine 2503 in 23S rRNA and position 2 of adenine 37 in tRNAs. m2A2503 modification seems to play a crucial role in the proofreading step occurring at the peptidyl transferase center and thus would serve to optimize ribosomal fidelity. In Vibrio atlanticus (strain LGP32) (Vibrio splendidus (strain Mel32)), this protein is Dual-specificity RNA methyltransferase RlmN.